Consider the following 106-residue polypeptide: Small ribosomal subunit protein uS10 (106 aa).

The protein belongs to the universal ribosomal protein uS10 family. As to quaternary structure, part of the 30S ribosomal subunit.

In terms of biological role, involved in the binding of tRNA to the ribosomes. The polypeptide is Small ribosomal subunit protein uS10 (Prochlorococcus marinus (strain MIT 9301)).